The chain runs to 1002 residues: Transposase for transposon gamma-delta (1002 aa).

The protein belongs to the transposase 7 family.

Required for transposition of transposon Tn1000. In Escherichia coli (strain K12), this protein is Transposase for transposon gamma-delta (tnpA).